An 86-amino-acid chain; its full sequence is Protein Vpu (86 aa).

Over 1–12 (MVDLLAKVDYRI) the chain is Extracellular. The chain crosses the membrane as a helical span at residues 13–33 (VIVAFIVALIIAIVVWTIAYI). The Cytoplasmic portion of the chain corresponds to 34 to 86 (EYRKLLRQRRIDRLIKRTRERAEDSGNESDGDTEELSTMVDMGNLRLLDVNDL). The segment at 52–71 (RERAEDSGNESDGDTEELST) is disordered. Serine 58 and serine 62 each carry phosphoserine; by host CK2. Residues 58–68 (SGNESDGDTEE) are compositionally biased toward acidic residues.

The protein belongs to the HIV-1 VPU protein family. Homopentamer. Interacts with host CD4 and BRTC; these interactions induce proteasomal degradation of CD4. Interacts with host BST2; this interaction leads to the degradation of host BST2. Interacts with host FBXW11. Interacts with host AP1M1; this interaction plays a role in the mistrafficking and subsequent degradation of host BST2. Interacts with host RANBP2; this interaction allows Vpu to down-regulate host BLM sumoylation. Post-translationally, phosphorylated by host CK2. This phosphorylation is necessary for interaction with human BTRC and degradation of CD4.

It is found in the host membrane. Its activity is regulated as follows. Ion channel activity is inhibited by hexamethylene amiloride in vitro. In terms of biological role, enhances virion budding by targeting host CD4 and Tetherin/BST2 to proteasome degradation. Degradation of CD4 prevents any unwanted premature interactions between viral Env and its host receptor CD4 in the endoplasmic reticulum. Degradation of antiretroviral protein Tetherin/BST2 is important for virion budding, as BST2 tethers new viral particles to the host cell membrane. Mechanistically, Vpu bridges either CD4 or BST2 to BTRC, a substrate recognition subunit of the Skp1/Cullin/F-box protein E3 ubiquitin ligase, induces their ubiquitination and subsequent proteasomal degradation. The alteration of the E3 ligase specificity by Vpu seems to promote the degradation of host IKBKB, leading to NF-kappa-B down-regulation and subsequent apoptosis. Acts as a viroporin that forms an oligomeric ion channel in membranes. Modulates the host DNA repair mechanisms to promote degradation of nuclear viral cDNA in cells that are already productively infected in order to suppress immune sensing and proviral hyper-integration (superinfection). Manipulates PML-NBs and modulates SUMOylation of host BLM protein thereby enhancing its DNA-end processing activity toward viral unintegrated linear DNA. Also inhibits RAD52-mediated homologous repair of viral cDNA, preventing the generation of dead-end circular forms of single copies of the long terminal repeat and permitting sustained nucleolytic attack. The sequence is that of Protein Vpu from Homo sapiens (Human).